Reading from the N-terminus, the 138-residue chain is Actin-related protein 2/3 complex subunit 5 (138 aa).

The tract at residues 1 to 21 is disordered; it reads MNYEDDNVESGQAGKSDAEYK.

This sequence belongs to the ARPC5 family. In terms of assembly, component of the Arp2/3 complex composed of arpB/Arp2, arpC/Arp3, arcA/p41-arc, arcB/p34-arc, arcC/p21-arc, arcD/p20-arc and arcE/p16-arc. Interacts with carmil (via the region between the LRR domain and COOH-terminal proline-rich domain); carmil is required for Arp2/3-dependent actin nucleation. Arp2/3 complex, MyoB, MyoC, and the alpha and beta subunits of capping protein all form a larger complex with carmil.

Its subcellular location is the cytoplasm. It localises to the cytoskeleton. It is found in the cytosol. The protein resides in the cell cortex. The protein localises to the cell projection. Its subcellular location is the pseudopodium. Functionally, functions as a component of the Arp2/3 complex which is involved in regulation of actin polymerization and together with an activating nucleation-promoting factor (NPF) mediates the formation of branched actin networks. Seems to contact the pointed end of the daughter actin filament. The Arp2/3 complex is involved in organizing the actin system in cell motility and chemotaxis, in phagocytosis and macropinocytosis, at late steps of endosome processing, and in mitosis. In concert with a group of other proteins, the Arp2/3 complex plays a general role in the rapid activation and adaptation of the actin system to its multiple functions. In Dictyostelium discoideum (Social amoeba), this protein is Actin-related protein 2/3 complex subunit 5 (arcE).